The chain runs to 314 residues: 2,3-dihydroxyphenylpropionate/2,3-dihydroxicinnamic acid 1,2-dioxygenase (314 aa).

His115 (proton donor) is an active-site residue. His179 serves as the catalytic Proton acceptor.

This sequence belongs to the LigB/MhpB extradiol dioxygenase family. Homotetramer. It depends on Fe(2+) as a cofactor.

It carries out the reaction 3-(2,3-dihydroxyphenyl)propanoate + O2 = (2Z,4E)-2-hydroxy-6-oxonona-2,4-dienedioate + H(+). The enzyme catalyses (2E)-3-(2,3-dihydroxyphenyl)prop-2-enoate + O2 = (2Z,4E,7E)-2-hydroxy-6-oxonona-2,4,7-trienedioate + H(+). It functions in the pathway aromatic compound metabolism; 3-phenylpropanoate degradation. Functionally, catalyzes the non-heme iron(II)-dependent oxidative cleavage of 2,3-dihydroxyphenylpropionic acid and 2,3-dihydroxicinnamic acid into 2-hydroxy-6-ketononadienedioate and 2-hydroxy-6-ketononatrienedioate, respectively. This is 2,3-dihydroxyphenylpropionate/2,3-dihydroxicinnamic acid 1,2-dioxygenase from Escherichia coli O139:H28 (strain E24377A / ETEC).